The sequence spans 309 residues: Fructosamine-3-kinase (309 aa).

N-acetylmethionine is present on M1. Residue 89–91 (EHL) participates in ATP binding. D217 (proton acceptor) is an active-site residue.

The protein belongs to the fructosamine kinase family. As to quaternary structure, monomer. In terms of tissue distribution, expressed in red blood cells, brain, heart, kidney and muscle. Lower expression is observed in liver. Not expressed in lung, spleen, testis and thymus.

The catalysed reaction is N(6)-(D-fructosyl)-L-lysyl-[protein] + ATP = N(6)-(3-O-phospho-D-fructosyl)-L-lysyl-[protein] + ADP + H(+). It carries out the reaction N(6)-D-ribulosyl-L-lysyl-[protein] + ATP = N(6)-(3-O-phospho-D-ribulosyl)-L-lysyl-[protein] + ADP + H(+). It catalyses the reaction N(6)-(D-psicosyl)-L-lysyl-[protein] + ATP = N(6)-(3-O-phospho-D-psicosyl)-L-lysyl-[protein] + ADP + H(+). Fructosamine-3-kinase involved in protein deglycation by mediating phosphorylation of fructoselysine residues on glycated proteins, to generate fructoselysine-3 phosphate. Fructoselysine-3 phosphate adducts are unstable and decompose under physiological conditions. Involved in intracellular deglycation in erythrocytes and pancreatic islets. Involved in the response to oxidative stress by mediating deglycation of NFE2L2/NRF2, glycation impairing NFE2L2/NRF2 function. Also able to phosphorylate psicosamines and ribulosamines. The chain is Fructosamine-3-kinase from Mus musculus (Mouse).